The primary structure comprises 335 residues: Mevalonate kinase (335 aa).

111–121 (PVGAGLGSSAA) contacts ATP. Asp-162 acts as the Proton acceptor in catalysis.

It belongs to the GHMP kinase family. Mevalonate kinase subfamily. In terms of assembly, homodimer. Mg(2+) serves as cofactor.

The protein resides in the cytoplasm. It carries out the reaction (R)-mevalonate + ATP = (R)-5-phosphomevalonate + ADP + H(+). Its pathway is isoprenoid biosynthesis; isopentenyl diphosphate biosynthesis via mevalonate pathway; isopentenyl diphosphate from (R)-mevalonate: step 1/3. Its function is as follows. Catalyzes the phosphorylation of (R)-mevalonate (MVA) to (R)-mevalonate 5-phosphate (MVAP). Functions in the mevalonate (MVA) pathway leading to isopentenyl diphosphate (IPP), a key precursor for the biosynthesis of isoprenoid compounds such as archaeal membrane lipids. This is Mevalonate kinase from Pyrococcus horikoshii (strain ATCC 700860 / DSM 12428 / JCM 9974 / NBRC 100139 / OT-3).